The following is an 81-amino-acid chain: Apolipoprotein C-I, acidic form (81 aa).

Residues 1–24 (MRLFLSLLVVVLSIVLEGPTPAQG) form the signal peptide.

It belongs to the apolipoprotein C1 family.

The protein localises to the secreted. The chain is Apolipoprotein C-I, acidic form (APOC1A) from Theropithecus gelada (Gelada baboon).